A 400-amino-acid polypeptide reads, in one-letter code: Enoyl-[acyl-carrier-protein] reductase [NADH] (400 aa).

Residues glycine 48–tyrosine 53, phenylalanine 74–glutamate 75, aspartate 111–alanine 112, and leucine 139–alanine 140 each bind NAD(+). Position 225 (tyrosine 225) interacts with substrate. The active-site Proton donor is the tyrosine 235. NAD(+) is bound by residues lysine 244 and valine 273 to threonine 275.

Belongs to the TER reductase family. As to quaternary structure, monomer.

It carries out the reaction a 2,3-saturated acyl-[ACP] + NAD(+) = a (2E)-enoyl-[ACP] + NADH + H(+). The protein operates within lipid metabolism; fatty acid biosynthesis. Its function is as follows. Involved in the final reduction of the elongation cycle of fatty acid synthesis (FAS II). Catalyzes the reduction of a carbon-carbon double bond in an enoyl moiety that is covalently linked to an acyl carrier protein (ACP). This Marinomonas sp. (strain MWYL1) protein is Enoyl-[acyl-carrier-protein] reductase [NADH].